We begin with the raw amino-acid sequence, 578 residues long: PTS system fructose-specific EIIB'BC component (578 aa).

2 PTS EIIB type-2 domains span residues 1 to 99 (MSKI…EALA) and 119 to 214 (VVAI…AALA). The Phosphocysteine intermediate; for EIIB activity role is filled by Cys125. Cys125 is modified (phosphocysteine; by EIIA). The PTS EIIC type-2 domain maps to 241–576 (PYMHLLTGVS…KKPIPAEERA (336 aa)). Transmembrane regions (helical) follow at residues 251–271 (YMLP…VFGI), 284–304 (LMAI…AGFI), 319–339 (IGGM…VAGF), 364–384 (VLIL…YVVG), 405–425 (NAVV…GGPI), 428–450 (AAYT…AVMA), 477–497 (AGGA…IPFA), 518–538 (LSMA…VLAI), and 545–565 (LGLY…LLIA).

It localises to the cell inner membrane. The catalysed reaction is D-fructose(out) + N(pros)-phospho-L-histidyl-[protein] = D-fructose 1-phosphate(in) + L-histidyl-[protein]. Its function is as follows. The phosphoenolpyruvate-dependent sugar phosphotransferase system (sugar PTS), a major carbohydrate active transport system, catalyzes the phosphorylation of incoming sugar substrates concomitantly with their translocation across the cell membrane. The enzyme II FruAB PTS system is involved in fructose transport. The chain is PTS system fructose-specific EIIB'BC component from Rhodobacter capsulatus (Rhodopseudomonas capsulata).